Consider the following 638-residue polypeptide: Probable lysine-specific demethylase 4F (638 aa).

The 43-residue stretch at 15–57 (IMTFYPTMEEFADFNTYVAYMESQGAHRAGLAKVIPPKEWKAR) folds into the JmjN domain. Tyr133 is a binding site for 2-oxoglutarate. The JmjC domain occupies 143 to 309 (EESTKQWNLG…YGKVASQCSC (167 aa)). Residues His189 and Glu191 each coordinate Fe cation. Residues Asn199 and Lys207 each coordinate 2-oxoglutarate. Zn(2+) contacts are provided by Cys235 and His241. Lys242 contacts 2-oxoglutarate. His277 contributes to the Fe cation binding site. Zn(2+) is bound by residues Cys307 and Cys309. Positions 426 to 474 (PCRGCGRGRGRGRGRGRRPRELGTEETTVQSAAKRRLSVGTGSRAPGRK) are disordered. Residues 431 to 443 (GRGRGRGRGRGRR) are compositionally biased toward basic residues.

It belongs to the JHDM3 histone demethylase family. Fe(2+) is required as a cofactor.

The protein resides in the nucleus. The enzyme catalyses N(6),N(6),N(6)-trimethyl-L-lysyl(9)-[histone H3] + 2 2-oxoglutarate + 2 O2 = N(6)-methyl-L-lysyl(9)-[histone H3] + 2 formaldehyde + 2 succinate + 2 CO2. Probable histone demethylase that specifically demethylates 'Lys-9' of histone H3, thereby playing a central role in histone code. The polypeptide is Probable lysine-specific demethylase 4F (Homo sapiens (Human)).